The primary structure comprises 71 residues: Omega-conotoxin-like CnVIIF (71 aa).

Intrachain disulfides connect Cys46–Cys61, Cys53–Cys65, and Cys60–Cys70. At Cys70 the chain carries Cysteine amide; in CnVIID.

Belongs to the conotoxin M superfamily. As to expression, expressed by the venom duct.

The protein resides in the secreted. Omega-conotoxins act at presynaptic membranes, they bind and block voltage-gated calcium channels (Cav). The polypeptide is Omega-conotoxin-like CnVIIF (Conus consors (Singed cone)).